The following is a 199-amino-acid chain: Putative pseudouridine methyltransferase (199 aa).

Residues leucine 132 and cysteine 186 each coordinate S-adenosyl-L-methionine.

It belongs to the methyltransferase superfamily. TrmY family.

It localises to the cytoplasm. The sequence is that of Putative pseudouridine methyltransferase from Vibrio campbellii (strain ATCC BAA-1116).